Reading from the N-terminus, the 73-residue chain is Sec-independent protein translocase protein TatA (73 aa).

Residues 1–21 traverse the membrane as a helical segment; that stretch reads MGSFSIGHWLIVLAIIVLLFG. A disordered region spans residues 43-73; it reads MEDTTPEKSEKVEHKEESATSQKIEETTKNA.

This sequence belongs to the TatA/E family. The Tat system comprises two distinct complexes: a TatABC complex, containing multiple copies of TatA, TatB and TatC subunits, and a separate TatA complex, containing only TatA subunits. Substrates initially bind to the TatABC complex, which probably triggers association of the separate TatA complex to form the active translocon.

The protein resides in the cell inner membrane. Functionally, part of the twin-arginine translocation (Tat) system that transports large folded proteins containing a characteristic twin-arginine motif in their signal peptide across membranes. TatA could form the protein-conducting channel of the Tat system. The protein is Sec-independent protein translocase protein TatA of Campylobacter concisus (strain 13826).